Here is a 580-residue protein sequence, read N- to C-terminus: Mucolipin-1 (580 aa).

The segment at M1–E38 is disordered. The Cytoplasmic portion of the chain corresponds to M1–K65. Position 10 is a phosphoserine (S10). The Dileucine motif; mediates targeting to lysosomes signature appears at E11–L16. Residues R42 to K62 form an interaction with phosphoinositides region. A helical transmembrane segment spans residues L66 to S86. Residues N87–R298 are Extracellular-facing. An extracellular/lumenal pore loop region spans residues L107 to T121. A disulfide bond links C166 and C192. The N-linked (GlcNAc...) asparagine glycan is linked to N230. A disulfide bridge connects residues C253 and C284. A helical membrane pass occupies residues L299–L321. Topologically, residues R322–F350 are cytoplasmic. The helical transmembrane segment at V351–M371 threads the bilayer. Residues K372–S382 lie on the Extracellular side of the membrane. A helical membrane pass occupies residues Y383–L405. The Cytoplasmic portion of the chain corresponds to T406–R427. The helical transmembrane segment at F428–G448 threads the bilayer. Residues P449 to S456 lie on the Extracellular side of the membrane. The segment at residues L457–F477 is an intramembrane region (pore-forming). A Selectivity filter motif is present at residues N469 to F474. The Extracellular portion of the chain corresponds to A478–W491. The chain crosses the membrane as a helical span at residues L492 to F513. The Cytoplasmic segment spans residues I514–N580. 2 positions are modified to phosphoserine; by PAK: S557 and S559. Residues C565–C567 are required for palmitoylation and association with membranes. Positions E573–L578 match the Dileucine internalization motif; mediates AP2 complex-dependent internalization motif.

Belongs to the transient receptor (TC 1.A.4) family. Polycystin subfamily. MCOLN1 sub-subfamily. As to quaternary structure, homotetramer. Homooligomer. Can heterooligomerize with MCOLN2 or MCOLN3; heteromeric assemblies have different channel properties as compared to the respective homooligomers and may be tissue-specific. Interacts with PDCD6. Interacts with TMEM163. Interacts with LAPTM4B. Palmitoylated; involved in association with membranes. In terms of processing, phosphorylation by PKA inhibits channel activity. Dephosphorylation increases activity. Post-translationally, proteolytically cleaved probably involving multiple lysosomal proteases including cathepsin B; inhibits lysosomal channel activity.

The protein localises to the late endosome membrane. It localises to the lysosome membrane. The protein resides in the cytoplasmic vesicle membrane. It is found in the cell projection. Its subcellular location is the phagocytic cup. The protein localises to the cytoplasmic vesicle. It localises to the phagosome membrane. The protein resides in the cell membrane. It catalyses the reaction Ca(2+)(in) = Ca(2+)(out). The enzyme catalyses Fe(2+)(in) = Fe(2+)(out). It carries out the reaction Mg(2+)(in) = Mg(2+)(out). The catalysed reaction is K(+)(in) = K(+)(out). It catalyses the reaction Na(+)(in) = Na(+)(out). Its activity is regulated as follows. Channel activity is controlled by multiple regulatory mechanisms in different subcellular compartments. Channel function is transiently modulated by changes in Ca(2+) in a pH-dependent manner; pH changes modify the aggregation state of unitary channels; a negative cooperativity between extracellular/lumenal Ca(2+) and H(+) is suggested. Regulated by phosphoinositides in a compartment-specific manner: in lysosomes activated by PtdIns(3,5)P2 (Phosphatidylinositol 3,5-bisphosphate) and at the plasma membrane inhibited by PtdIns(4,5)P2 (Phosphatidylinositol 4,5-bisphosphate). Nonselective cation channel probably playing a role in the regulation of membrane trafficking events and of metal homeostasis. Acts as a Ca(2+)-permeable cation channel with inwardly rectifying activity. Proposed to play a major role in Ca(2+) release from late endosome and lysosome vesicles to the cytoplasm, which is important for many lysosome-dependent cellular events, including the fusion and trafficking of these organelles, exocytosis and autophagy. Required for efficient uptake of large particles in macrophages in which Ca(2+) release from the lysosomes triggers lysosomal exocytosis. May also play a role in phagosome-lysosome fusion. Involved in lactosylceramide trafficking indicative for a role in the regulation of late endocytic membrane fusion/fission events. By mediating lysosomal Ca(2+) release is involved in regulation of mTORC1 signaling and in mTOR/TFEB-dependent lysosomal adaptation to environmental cues such as nutrient levels. Seems to act as lysosomal active oxygen species (ROS) sensor involved in ROS-induced TFEB activation and autophagy. Also functions as a Fe(2+) permeable channel in late endosomes and lysosomes. Also permeable to Mg(2+), Na(+). K(+) and Cs(+). Proposed to play a role in zinc homeostasis probably implicating its association with TMEM163. In adaptive immunity, TRPML2 and TRPML1 may play redundant roles in the function of the specialized lysosomes of B cells. In terms of biological role, may contribute to cellular lipase activity within the late endosomal pathway or at the cell surface which may be involved in processes of membrane reshaping and vesiculation, especially the growth of tubular structures. However, it is not known, whether it conveys the enzymatic activity directly, or merely facilitates the activity of an associated phospholipase. The protein is Mucolipin-1 (MCOLN1) of Macaca fascicularis (Crab-eating macaque).